The following is a 926-amino-acid chain: UvrABC system protein A (926 aa).

Residue 31-38 (GPSGSGKS) coordinates ATP. The segment at 251-278 (CPEHGFSIPELSARLFSFNSPYGACPSC) adopts a C4-type zinc-finger fold. ABC transporter domains are found at residues 308–568 (SGYF…PSSL) and 588–916 (PSGK…KYLR). 620 to 627 (GVSGSGKS) is a binding site for ATP. The C4-type zinc-finger motif lies at 719 to 745 (CEACQGEGVIKVEMHFLPPVYVTCEVC).

This sequence belongs to the ABC transporter superfamily. UvrA family. In terms of assembly, forms a heterotetramer with UvrB during the search for lesions.

Its subcellular location is the cytoplasm. In terms of biological role, the UvrABC repair system catalyzes the recognition and processing of DNA lesions. UvrA is an ATPase and a DNA-binding protein. A damage recognition complex composed of 2 UvrA and 2 UvrB subunits scans DNA for abnormalities. When the presence of a lesion has been verified by UvrB, the UvrA molecules dissociate. This Aquifex aeolicus (strain VF5) protein is UvrABC system protein A.